The following is a 177-amino-acid chain: ATP-dependent protease subunit HslV (177 aa).

Thr-2 is an active-site residue. Ala-159, Asp-162, and Thr-165 together coordinate Na(+).

The protein belongs to the peptidase T1B family. HslV subfamily. A double ring-shaped homohexamer of HslV is capped on each side by a ring-shaped HslU homohexamer. The assembly of the HslU/HslV complex is dependent on binding of ATP.

It is found in the cytoplasm. It catalyses the reaction ATP-dependent cleavage of peptide bonds with broad specificity.. Its activity is regulated as follows. Allosterically activated by HslU binding. Functionally, protease subunit of a proteasome-like degradation complex believed to be a general protein degrading machinery. This chain is ATP-dependent protease subunit HslV, found in Lactobacillus leichmannii.